The primary structure comprises 390 residues: 23S rRNA (uracil(747)-C(5))-methyltransferase RlmC (390 aa).

Cys12, Cys20, Cys23, and Cys100 together coordinate [4Fe-4S] cluster. S-adenosyl-L-methionine is bound by residues Gln225, Phe254, Glu275, and Asn322. The active-site Nucleophile is the Cys349.

It belongs to the class I-like SAM-binding methyltransferase superfamily. RNA M5U methyltransferase family. RlmC subfamily.

The catalysed reaction is uridine(747) in 23S rRNA + S-adenosyl-L-methionine = 5-methyluridine(747) in 23S rRNA + S-adenosyl-L-homocysteine + H(+). In terms of biological role, catalyzes the formation of 5-methyl-uridine at position 747 (m5U747) in 23S rRNA. The sequence is that of 23S rRNA (uracil(747)-C(5))-methyltransferase RlmC from Shewanella baltica (strain OS185).